The primary structure comprises 98 residues: NADH-ubiquinone oxidoreductase chain 4L (98 aa).

The next 3 membrane-spanning stretches (helical) occupy residues 1–21 (MSMVYANIFLAFIMSLMGLLV), 30–50 (LLCLEGMMLSLFVMMTVTILI), and 61–81 (IILLVFAACEAALGLSLLVMV).

The protein belongs to the complex I subunit 4L family. As to quaternary structure, core subunit of respiratory chain NADH dehydrogenase (Complex I) which is composed of 45 different subunits.

The protein localises to the mitochondrion inner membrane. It catalyses the reaction a ubiquinone + NADH + 5 H(+)(in) = a ubiquinol + NAD(+) + 4 H(+)(out). Its function is as follows. Core subunit of the mitochondrial membrane respiratory chain NADH dehydrogenase (Complex I) which catalyzes electron transfer from NADH through the respiratory chain, using ubiquinone as an electron acceptor. Part of the enzyme membrane arm which is embedded in the lipid bilayer and involved in proton translocation. The sequence is that of NADH-ubiquinone oxidoreductase chain 4L (MT-ND4L) from Pagophilus groenlandicus (Harp seal).